The chain runs to 1434 residues: Probable ATP-dependent RNA helicase spindle-E (1434 aa).

In terms of domain architecture, Helicase ATP-binding spans 126–295 (INAINENPVV…FANESSAPPV (170 aa)). 139–146 (GETGCGKT) contributes to the ATP binding site. Positions 241-244 (DEVH) match the DEAH box motif. One can recognise a Helicase C-terminal domain in the interval 356–527 (TGKSYNQSLR…NCVLKAKELK (172 aa)). The Tudor domain maps to 936–999 (AGAITKGLML…RLMSQDLLRH (64 aa)).

The protein belongs to the DEAD box helicase family. DEAH subfamily.

It is found in the cytoplasm. It carries out the reaction ATP + H2O = ADP + phosphate + H(+). Its function is as follows. Probable ATP-binding RNA helicase which plays a central role during spermatogenesis and oogenesis by repressing transposable elements and preventing their mobilization, which is essential for the germline integrity. Acts via the piRNA metabolic process, which mediates the repression of transposable elements during meiosis by forming complexes composed of piRNAs and Piwi and govern the methylation and subsequent repression of transposons. Involved in the repression of LTR retrotransposon copia. Also involved in telomere regulation by repressing specialized telomeric retroelements HeT-A, TAHRE, and TART; Drosophila telomeres being maintained by transposition of specialized telomeric retroelements. Involved in telomeric trans-silencing, a repression mechanism by which a transposon or a transgene inserted in subtelomeric heterochromatin has the capacity to repress in trans in the female germline, a homologous transposon, or transgene located in euchromatin. Involved in the repression of testis-expressed Stellate genes by the homologous Su(Ste) repeats. Required for anteroposterior and dorsoventral axis formation during oogenesis. This Drosophila persimilis (Fruit fly) protein is Probable ATP-dependent RNA helicase spindle-E (spn-E).